The sequence spans 286 residues: L-cysteine S-thiosulfotransferase subunit SoxA (286 aa).

An N-terminal signal peptide occupies residues 1 to 26 (MTVSKRFLAPVFAMVGGLVLAFSANA). Residues 80–166 (LAVERGADIW…ALTSYIKHQS (87 aa)) form the Cytochrome c domain. Cys100, Cys103, His104, Cys138, Cys202, Cys205, and His206 together coordinate heme. Residue Arg243 coordinates substrate. Position 247 (Cys247) interacts with heme. Cys247 acts as the Cysteine persulfide intermediate in catalysis.

This sequence belongs to the SoxA family. As to quaternary structure, heterodimer of SoxA and SoxX. It depends on heme as a cofactor. In terms of processing, cysteine persulfide at Cys-247.

It is found in the periplasm. The catalysed reaction is L-cysteinyl-[SoxY protein] + thiosulfate + 2 Fe(III)-[cytochrome c] = S-sulfosulfanyl-L-cysteinyl-[SoxY protein] + 2 Fe(II)-[cytochrome c] + 2 H(+). It carries out the reaction S-sulfanyl-L-cysteinyl-[SoxY protein] + thiosulfate + 2 Fe(III)-[cytochrome c] = S-(2-sulfodisulfanyl)-L-cysteinyl-[SoxY protein] + 2 Fe(II)-[cytochrome c] + 2 H(+). Functionally, C-type diheme cytochrome, which is part of the SoxAX cytochrome complex involved in sulfur oxidation. The SoxAX complex catalyzes the formation of a heterodisulfide bond between the conserved cysteine residue on a sulfur carrier SoxYZ complex subunit SoxY and thiosulfate or other inorganic sulfur substrates. This leads to the liberation of two electrons, which may be transferred from the SoxAX complex to another cytochrome c that then channels them into the respiratory electron transport chain. Some electrons may be used for reductive CO(2) fixation. The protein is L-cysteine S-thiosulfotransferase subunit SoxA of Pseudaminobacter salicylatoxidans.